We begin with the raw amino-acid sequence, 183 residues long: Hypoxanthine-guanine phosphoribosyltransferase (183 aa).

Diphosphate-binding residues include R47 and G48. Mg(2+) is bound by residues E103 and D104. The active-site Proton acceptor is the D107. GMP-binding positions include K134, 155 to 156, and D162; that span reads FV. R168 lines the diphosphate pocket.

This sequence belongs to the purine/pyrimidine phosphoribosyltransferase family. The cofactor is Mg(2+).

It is found in the cytoplasm. It carries out the reaction IMP + diphosphate = hypoxanthine + 5-phospho-alpha-D-ribose 1-diphosphate. The catalysed reaction is GMP + diphosphate = guanine + 5-phospho-alpha-D-ribose 1-diphosphate. It participates in purine metabolism; IMP biosynthesis via salvage pathway; IMP from hypoxanthine: step 1/1. Its pathway is purine metabolism; GMP biosynthesis via salvage pathway; GMP from guanine: step 1/1. Purine salvage pathway enzyme that catalyzes the transfer of the ribosyl-5-phosphate group from 5-phospho-alpha-D-ribose 1-diphosphate (PRPP) to the N9 position of the 6-oxopurines hypoxanthine and guanine to form the corresponding ribonucleotides IMP (inosine 5'-monophosphate) and GMP (guanosine 5'-monophosphate), with the release of PPi. The polypeptide is Hypoxanthine-guanine phosphoribosyltransferase (hpt) (Lactococcus lactis subsp. lactis (strain IL1403) (Streptococcus lactis)).